The chain runs to 130 residues: Glycine cleavage system H protein (130 aa).

Residues 24–106 enclose the Lipoyl-binding domain; the sequence is GIKVGISAFA…YQEGWLLKIT (83 aa). At K65 the chain carries N6-lipoyllysine.

This sequence belongs to the GcvH family. The glycine cleavage system is composed of four proteins: P, T, L and H. Requires (R)-lipoate as cofactor.

Functionally, the glycine cleavage system catalyzes the degradation of glycine. The H protein shuttles the methylamine group of glycine from the P protein to the T protein. This is Glycine cleavage system H protein from Synechococcus sp. (strain RCC307).